Consider the following 74-residue polypeptide: Large ribosomal subunit protein bL31 (74 aa).

Residues C17, C19, C38, and C41 each coordinate Zn(2+).

Belongs to the bacterial ribosomal protein bL31 family. Type A subfamily. Part of the 50S ribosomal subunit. Zn(2+) serves as cofactor.

Functionally, binds the 23S rRNA. The chain is Large ribosomal subunit protein bL31 from Gloeobacter violaceus (strain ATCC 29082 / PCC 7421).